Consider the following 84-residue polypeptide: Exodeoxyribonuclease 7 small subunit (84 aa).

Belongs to the XseB family. Heterooligomer composed of large and small subunits.

The protein resides in the cytoplasm. The enzyme catalyses Exonucleolytic cleavage in either 5'- to 3'- or 3'- to 5'-direction to yield nucleoside 5'-phosphates.. Functionally, bidirectionally degrades single-stranded DNA into large acid-insoluble oligonucleotides, which are then degraded further into small acid-soluble oligonucleotides. In Yersinia pseudotuberculosis serotype O:1b (strain IP 31758), this protein is Exodeoxyribonuclease 7 small subunit.